A 348-amino-acid chain; its full sequence is MNGTEGPDFYIPMSNQTGVVRSPFEYPQYYLAEPWQFSMLAAYMFLLIVLGFPINFLTLYVTVQHKKLRTPLNYILLNLAVADLFMVLGGFTTTLYTSLHGYFVFGPTGCNVEGFFATLGGEIALWSLVVLAIERYVVVCKPMSNFRFGENHAIMGVAFTWIMALACAAPPLVGWSRYIPEGMQCSCGIDYYTLKPEVNNESFVIYMFVVHFTIPLIIIFFCYGQLVFTVKEAAAQQQESATTQKAEKEVTRMVIIMVIAFLICWVPYASVAFYIFTHQGSNFGPIFMTIPAFFAKSSSIYNPVIYIMMNKQFRNCMLTTICCGKNPLGDDEASATASKTETSQVAPA.

At Met1 the chain carries N-acetylmethionine. The Extracellular segment spans residues 1–36; sequence MNGTEGPDFYIPMSNQTGVVRSPFEYPQYYLAEPWQ. Residues Asn2 and Asn15 are each glycosylated (N-linked (GlcNAc...) asparagine). The chain crosses the membrane as a helical span at residues 37-61; it reads FSMLAAYMFLLIVLGFPINFLTLYV. Topologically, residues 62–73 are cytoplasmic; it reads TVQHKKLRTPLN. The chain crosses the membrane as a helical span at residues 74–96; that stretch reads YILLNLAVADLFMVLGGFTTTLY. Over 97-110 the chain is Extracellular; it reads TSLHGYFVFGPTGC. Cys110 and Cys187 are joined by a disulfide. Residues 111 to 133 traverse the membrane as a helical segment; sequence NVEGFFATLGGEIALWSLVVLAI. The 'Ionic lock' involved in activated form stabilization signature appears at 134 to 136; it reads ERY. The Cytoplasmic segment spans residues 134-152; it reads ERYVVVCKPMSNFRFGENH. A helical membrane pass occupies residues 153–173; the sequence is AIMGVAFTWIMALACAAPPLV. Residues 174-202 lie on the Extracellular side of the membrane; it reads GWSRYIPEGMQCSCGIDYYTLKPEVNNES. Glu201 serves as a coordination point for Zn(2+). Residues 203–224 traverse the membrane as a helical segment; that stretch reads FVIYMFVVHFTIPLIIIFFCYG. The Cytoplasmic segment spans residues 225–252; that stretch reads QLVFTVKEAAAQQQESATTQKAEKEVTR. A helical transmembrane segment spans residues 253–274; it reads MVIIMVIAFLICWVPYASVAFY. Residues 275–286 lie on the Extracellular side of the membrane; sequence IFTHQGSNFGPI. Zn(2+) is bound at residue Gln279. A helical transmembrane segment spans residues 287–308; sequence FMTIPAFFAKSSSIYNPVIYIM. Position 296 is an N6-(retinylidene)lysine (Lys296). Over 309–348 the chain is Cytoplasmic; it reads MNKQFRNCMLTTICCGKNPLGDDEASATASKTETSQVAPA. Residues Cys322 and Cys323 are each lipidated (S-palmitoyl cysteine). Residues 330–348 form an interaction with SAG region; the sequence is DDEASATASKTETSQVAPA. Ser334 bears the Phosphoserine mark. Thr336 carries the post-translational modification Phosphothreonine. Ser338 carries the post-translational modification Phosphoserine. Phosphothreonine occurs at positions 340 and 342. At Ser343 the chain carries Phosphoserine.

Belongs to the G-protein coupled receptor 1 family. Opsin subfamily. Homodimer. May form a complex composed of RHO, GRK1 and RCVRN in a Ca(2+)-dependent manner; RCVRN prevents the interaction between GRK1 and RHO. Interacts with GRK1. Interacts (phosphorylated form) with SAG. Interacts with GNAT1. Interacts with GNAT3. SAG and G-proteins compete for a common binding site. Interacts with PRCD; the interaction promotes PRCD stability. Forms a complex with ASAP1 and ARF4. Forms a complex with ASAP1, RAB11A, Rabin8/RAB3IP, ARF4 and RAB11FIP3; the complex regulates Golgi-to-cilia rhodopsin/RHO transport in photoreceptors. In terms of processing, phosphorylated on some or all of the serine and threonine residues present in the C-terminal region. Contains one covalently linked retinal chromophore. Upon light absorption, the covalently bound 11-cis-retinal is converted to all-trans-retinal. After hydrolysis of the Schiff base and release of the covalently bound all-trans-retinal, active rhodopsin is regenerated by binding of a fresh molecule of 11-cis-retinal.

The protein localises to the membrane. It is found in the cell projection. The protein resides in the cilium. Its subcellular location is the photoreceptor outer segment. In terms of biological role, photoreceptor required for image-forming vision at low light intensity. Required for photoreceptor cell viability after birth. Light-induced isomerization of 11-cis to all-trans retinal triggers a conformational change that activates signaling via G-proteins. Subsequent receptor phosphorylation mediates displacement of the bound G-protein alpha subunit by the arrestin SAG and terminates signaling. The chain is Rhodopsin (RHO) from Oryctolagus cuniculus (Rabbit).